Reading from the N-terminus, the 811-residue chain is Zinc finger protein 839 (811 aa).

The C2H2-type zinc-finger motif lies at 197–222 (FKCQTCEKSYIGKGGLARHFKLNPGH). 3 disordered regions span residues 329–349 (QRRA…RASP), 455–555 (PDNL…NGSV), and 612–654 (ALEH…AEAG). Basic and acidic residues predominate over residues 476 to 485 (SSEKREREAA). Positions 501–510 (SNDTTESLAA) are enriched in polar residues.

The chain is Zinc finger protein 839 (ZNF839) from Homo sapiens (Human).